The sequence spans 106 residues: Transcription initiation factor IIA subunit 2 (106 aa).

It belongs to the TFIIA subunit 2 family. TFIIA is a heterodimer of the large unprocessed subunit 1 and a small subunit gamma. It was originally believed to be a heterotrimer of an alpha (p30), a beta (p20) and a gamma (p14) subunit. Forms a complex with Moonshiner/CG12721 and Trf2. In terms of tissue distribution, ubiquitous.

The protein localises to the nucleus. Its function is as follows. TFIIA is a component of the transcription machinery of RNA polymerase II and plays an important role in transcriptional activation. TFIIA in a complex with TBP mediates transcriptional activity. Part of a rhi-dependent transcription machinery that enables the generation of piRNA precursors from heterochromatin while maintaining the suppression of transposon-encoded promoters and enhancers. Forms a complex with Moonshiner/CG12721 and Trf2 which recruit transcriptional machinery to heterochromatin to initiate the bidirectional transcription of piRNA clusters, by interacting with the RDC (rhi, del and cuff) complex that binds to repressive H3K9me3 marks in the chromatin. This mechanism allows transcription to occur in piRNA clusters despite the lack of proper promoter elements and in the presence of the repressive H3K9me3 mark. The chain is Transcription initiation factor IIA subunit 2 (TfIIA-S) from Drosophila melanogaster (Fruit fly).